Consider the following 329-residue polypeptide: Ketol-acid reductoisomerase (NADP(+)) (329 aa).

The 181-residue stretch at 2 to 182 folds into the KARI N-terminal Rossmann domain; it reads TQLFYDTDAD…GGTRAGILET (181 aa). Residues 25-28, S51, S53, and 83-86 contribute to the NADP(+) site; these read YGSQ and DEFQ. Residue H108 is part of the active site. G134 serves as a coordination point for NADP(+). A KARI C-terminal knotted domain is found at 183–328; it reads NFKEETETDL…KGLRSMFSWL (146 aa). Positions 191, 195, 227, and 231 each coordinate Mg(2+). Residue S252 coordinates substrate.

Belongs to the ketol-acid reductoisomerase family. It depends on Mg(2+) as a cofactor.

The catalysed reaction is (2R)-2,3-dihydroxy-3-methylbutanoate + NADP(+) = (2S)-2-acetolactate + NADPH + H(+). The enzyme catalyses (2R,3R)-2,3-dihydroxy-3-methylpentanoate + NADP(+) = (S)-2-ethyl-2-hydroxy-3-oxobutanoate + NADPH + H(+). It participates in amino-acid biosynthesis; L-isoleucine biosynthesis; L-isoleucine from 2-oxobutanoate: step 2/4. The protein operates within amino-acid biosynthesis; L-valine biosynthesis; L-valine from pyruvate: step 2/4. Its function is as follows. Involved in the biosynthesis of branched-chain amino acids (BCAA). Catalyzes an alkyl-migration followed by a ketol-acid reduction of (S)-2-acetolactate (S2AL) to yield (R)-2,3-dihydroxy-isovalerate. In the isomerase reaction, S2AL is rearranged via a Mg-dependent methyl migration to produce 3-hydroxy-3-methyl-2-ketobutyrate (HMKB). In the reductase reaction, this 2-ketoacid undergoes a metal-dependent reduction by NADPH to yield (R)-2,3-dihydroxy-isovalerate. The sequence is that of Ketol-acid reductoisomerase (NADP(+)) from Prochlorococcus marinus (strain AS9601).